A 303-amino-acid chain; its full sequence is Aspartate carbamoyltransferase catalytic subunit (303 aa).

The carbamoyl phosphate site is built by arginine 49 and threonine 50. Residue lysine 77 participates in L-aspartate binding. Positions 99, 126, and 129 each coordinate carbamoyl phosphate. L-aspartate is bound by residues arginine 159 and arginine 211. Carbamoyl phosphate-binding residues include serine 252 and proline 253.

This sequence belongs to the aspartate/ornithine carbamoyltransferase superfamily. ATCase family. As to quaternary structure, heterododecamer (2C3:3R2) of six catalytic PyrB chains organized as two trimers (C3), and six regulatory PyrI chains organized as three dimers (R2).

The enzyme catalyses carbamoyl phosphate + L-aspartate = N-carbamoyl-L-aspartate + phosphate + H(+). The protein operates within pyrimidine metabolism; UMP biosynthesis via de novo pathway; (S)-dihydroorotate from bicarbonate: step 2/3. Its function is as follows. Catalyzes the condensation of carbamoyl phosphate and aspartate to form carbamoyl aspartate and inorganic phosphate, the committed step in the de novo pyrimidine nucleotide biosynthesis pathway. This is Aspartate carbamoyltransferase catalytic subunit from Listeria welshimeri serovar 6b (strain ATCC 35897 / DSM 20650 / CCUG 15529 / CIP 8149 / NCTC 11857 / SLCC 5334 / V8).